The following is a 607-amino-acid chain: Bifunctional endo-1,4-beta-xylanase A (607 aa).

The N-terminal stretch at 1 to 18 (MRTIKFFFAVAIATVAKA) is a signal peptide. The GH11 1 domain maps to 35–242 (NGQTQHKGVA…SSGIADVTKL (208 aa)). E141 functions as the Nucleophile in the catalytic mechanism. Catalysis depends on E223, which acts as the Proton donor. Over residues 248-272 (QKGSNPAPTSTGTVPSSSAGGSTAN) the composition is skewed to polar residues. A disordered region spans residues 248–284 (QKGSNPAPTSTGTVPSSSAGGSTANGKKFTVGNGQNQ). The 208-residue stretch at 280–487 (NGQNQHKGVN…SSGVADVTLL (208 aa)) folds into the GH11 2 domain. The Nucleophile role is filled by E386. E474 acts as the Proton donor in catalysis. A disordered region spans residues 493 to 514 (PKGSSPATSAAPRTTTRTTTRT). The segment covering 496–514 (SSPATSAAPRTTTRTTTRT) has biased composition (low complexity). 2 CBM10 domains span residues 523 to 563 (KCSA…CGCG) and 566 to 606 (QCSS…CGCG).

The protein belongs to the glycosyl hydrolase 11 (cellulase G) family.

The catalysed reaction is Endohydrolysis of (1-&gt;4)-beta-D-xylosidic linkages in xylans.. Its pathway is glycan degradation; xylan degradation. Its function is as follows. Hydrolyzes xylans into xylobiose and xylose. In Neocallimastix patriciarum (Rumen fungus), this protein is Bifunctional endo-1,4-beta-xylanase A (XYNA).